The primary structure comprises 67 residues: DNA-directed RNA polymerase subunit omega (67 aa).

This sequence belongs to the RNA polymerase subunit omega family. The RNAP catalytic core consists of 2 alpha, 1 beta, 1 beta' and 1 omega subunit. When a sigma factor is associated with the core the holoenzyme is formed, which can initiate transcription.

The enzyme catalyses RNA(n) + a ribonucleoside 5'-triphosphate = RNA(n+1) + diphosphate. Its function is as follows. Promotes RNA polymerase assembly. Latches the N- and C-terminal regions of the beta' subunit thereby facilitating its interaction with the beta and alpha subunits. The protein is DNA-directed RNA polymerase subunit omega of Bordetella petrii (strain ATCC BAA-461 / DSM 12804 / CCUG 43448).